Here is a 352-residue protein sequence, read N- to C-terminus: C-C chemokine receptor type 5 (352 aa).

Residues 1–30 are Extracellular-facing; that stretch reads MDYQTSTPLYDIDYGMSEPCQKLNVRQIAA. Tyr3 bears the Sulfotyrosine mark. Ser6 carries an O-linked (GalNAc...) serine glycan. Residues Tyr10 and Tyr14 each carry the sulfotyrosine modification. Cystine bridges form between Cys20–Cys269 and Cys101–Cys178. A helical transmembrane segment spans residues 31–58; that stretch reads RLLPPLYSLVFIFGFVGNMLVVLILINC. Residues 59-68 lie on the Cytoplasmic side of the membrane; it reads KKLKSMTDIY. The chain crosses the membrane as a helical span at residues 69–89; sequence LLNLAISDLLFIITIPFWAHY. Residues 90-102 lie on the Extracellular side of the membrane; sequence AADQWVFGNTMCQ. The helical transmembrane segment at 103 to 124 threads the bilayer; the sequence is LFTGFYFIGYFGGIFFIILLTI. Topologically, residues 125–141 are cytoplasmic; it reads DRYLAIVHAVFALKART. The helical transmembrane segment at 142–166 threads the bilayer; sequence VTFGAATSVVTWVVAVFASLPGIIF. At 167–198 the chain is on the extracellular side; the sequence is TKSQKEGSRHTCSPHFPSSQYHFWKNFQTLKI. A helical membrane pass occupies residues 199–218; that stretch reads VILGLVLPLLVMIVCYSGII. Topologically, residues 219–235 are cytoplasmic; it reads KTLLRCRNEKKKHKAVR. The helical transmembrane segment at 236–260 threads the bilayer; that stretch reads LIFVIMIVYFLFWAPYNIVLLLSTF. Over 261 to 277 the chain is Extracellular; that stretch reads QEFFGLNNCSGSNRLDQ. Residues 278–301 form a helical membrane-spanning segment; that stretch reads AMQVTETLGMTHCCINPIIYAFVG. Residues 302 to 352 are Cytoplasmic-facing; the sequence is EKFRNYLLRFFRKYFASRFCKGCPVFQGEAPERVSSVYTRSTGEQEISVGL. 2 S-palmitoyl cysteine lipidation sites follow: Cys321 and Cys324. Phosphoserine; by BARK1 is present on residues Ser336, Ser337, Ser342, and Ser349.

Belongs to the G-protein coupled receptor 1 family. As to quaternary structure, interacts with PRAF2. Efficient ligand binding to CCL3/MIP-1alpha and CCL4/MIP-1beta requires sulfation, O-glycosylation and sialic acid modifications. Glycosylation on Ser-6 is required for efficient binding of CCL4. Interacts with GRK2. Interacts with ARRB1 and ARRB2. Interacts with CNIH4. Interacts with S100A4; this interaction stimulates T-lymphocyte chemotaxis. In terms of processing, sulfated on at least 2 of the N-terminal tyrosines. Sulfation is required for efficient binding of the chemokines, CCL3 and CCL4. O-glycosylated, but not N-glycosylated. Ser-6 appears to be the major site. Also sialylated glycans present which contribute to chemokine binding. Ser-17 may also be glycosylated and, if so, with small moieties such as a T-antigen. Post-translationally, palmitoylation in the C-terminal is important for cell surface expression. In terms of processing, phosphorylation on serine residues in the C-terminal is stimulated by binding CC chemokines especially by APO-RANTES.

The protein resides in the cell membrane. In terms of biological role, receptor for a number of inflammatory CC-chemokines including CCL3/MIP-1-alpha, CCL4/MIP-1-beta and RANTES and subsequently transduces a signal by increasing the intracellular calcium ion level. May play a role in the control of granulocytic lineage proliferation or differentiation. Participates in T-lymphocyte migration to the infection site by acting as a chemotactic receptor. This chain is C-C chemokine receptor type 5 (CCR5), found in Bos taurus (Bovine).